The following is a 216-amino-acid chain: Somatotropin (216 aa).

Residues 1-26 (MAADSQTPWLLTFSLLCLLWPQEAGA) form the signal peptide. His-45 contributes to the Zn(2+) binding site. The cysteines at positions 78 and 189 are disulfide-linked. Ser-131 carries the post-translational modification Phosphoserine. Zn(2+) is bound at residue Glu-198. A disulfide bond links Cys-206 and Cys-214.

Belongs to the somatotropin/prolactin family.

The protein localises to the secreted. Functionally, plays an important role in growth control. Its major role in stimulating body growth is to stimulate the liver and other tissues to secrete IGF1. It stimulates both the differentiation and proliferation of myoblasts. It also stimulates amino acid uptake and protein synthesis in muscle and other tissues. In Rattus norvegicus (Rat), this protein is Somatotropin (Gh1).